The chain runs to 86 residues: Photosystem I reaction center subunit PsaK 1 (86 aa).

The propeptide occupies 1–8; sequence MLTSTLLA. 2 consecutive transmembrane segments (helical) span residues 14-34 and 60-80; these read LEWS…AITF and PALL…VLGL.

It belongs to the PsaG/PsaK family. As to quaternary structure, the cyanobacterial PSI reaction center is composed of one copy each of PsaA,B,C,D,E,F,I,J,K,L,M and X, and forms dimeric and tetrameric complexes.

It localises to the cellular thylakoid membrane. This Nostoc sp. (strain PCC 7120 / SAG 25.82 / UTEX 2576) protein is Photosystem I reaction center subunit PsaK 1 (psaK1).